Consider the following 154-residue polypeptide: SsrA-binding protein (154 aa).

Residues 126 to 154 (GKKKYDKREDMKKKEAQREVERAFRERQK) are disordered. Basic and acidic residues predominate over residues 131–154 (DKREDMKKKEAQREVERAFRERQK).

It belongs to the SmpB family.

It localises to the cytoplasm. Functionally, required for rescue of stalled ribosomes mediated by trans-translation. Binds to transfer-messenger RNA (tmRNA), required for stable association of tmRNA with ribosomes. tmRNA and SmpB together mimic tRNA shape, replacing the anticodon stem-loop with SmpB. tmRNA is encoded by the ssrA gene; the 2 termini fold to resemble tRNA(Ala) and it encodes a 'tag peptide', a short internal open reading frame. During trans-translation Ala-aminoacylated tmRNA acts like a tRNA, entering the A-site of stalled ribosomes, displacing the stalled mRNA. The ribosome then switches to translate the ORF on the tmRNA; the nascent peptide is terminated with the 'tag peptide' encoded by the tmRNA and targeted for degradation. The ribosome is freed to recommence translation, which seems to be the essential function of trans-translation. In Anoxybacillus flavithermus (strain DSM 21510 / WK1), this protein is SsrA-binding protein.